A 365-amino-acid polypeptide reads, in one-letter code: Zinc finger protein lsy-2 (365 aa).

The disordered stretch occupies residues 1–36 (MLTRRNAKQSQRNSADQSLSEFNSSSMTHGSNQSVY). Polar residues predominate over residues 8 to 36 (KQSQRNSADQSLSEFNSSSMTHGSNQSVY). 5 consecutive C2H2-type zinc fingers follow at residues 78–100 (HQCNVCNKIFVSYKGLQQHAVIH), 106–128 (FRCDICSKSFRFKSNLFEHRSVH), 134–156 (HACPYCGKTCRLKGNLKKHLRTH), 264–287 (HDCPVCKSQFMTRMDCVSHHTLEH), and 296–318 (FFCEKCYRPFADEASYNQHMSYH).

It localises to the nucleus speckle. Functionally, involved in transcriptional regulation. Required to specify left-right asymmetry of the ASE gustatory neurons, probably acting upstream of microRNA lsy-6. Involved in maintaining the distinction between somatic and germ cells, perhaps acting by repressing germ cell-specific genes in somatic cells. The polypeptide is Zinc finger protein lsy-2 (Caenorhabditis elegans).